A 103-amino-acid chain; its full sequence is Entry-fusion complex protein OPG086 (103 aa).

The helical; Signal-anchor transmembrane segment at 1-21 threads the bilayer; sequence MTLFLVIFFILFLLLCYFFSF. At 22-103 the chain is on the virion surface side; it reads KRTNKMEIGI…KLVPTLLLSK (82 aa).

It belongs to the orthopoxvirus OPG086 family. Interacts with OPG099/L5. Component of the entry fusion complex (EFC) composed of OPG053, OPG076, OPG086, OPG094, OPG095, OPG099, OPG107, OPG143, OPG104, OPG147 and OPG155. Except for OPG095 and OPG053, each of the EFC proteins is required for assembly or stability of the complex. Unglycosylated because produced in viral factories instead of the classic ER -Golgi route.

Its subcellular location is the virion membrane. In terms of biological role, component of the entry fusion complex (EFC), which consists of 11 proteins. During cell infection, this complex mediates entry of the virion core into the host cytoplasm by a two-step mechanism consisting of lipid mixing of the viral and cellular membranes and subsequent pore formation. The polypeptide is Entry-fusion complex protein OPG086 (OPG086) (Vertebrata (FPV)).